Reading from the N-terminus, the 1067-residue chain is MPPPPHIKPENVLKRAQELIAVGQAPAALNVLHEHVTSKRTRSSPIASLEPVMLLFVELCVDLRKGKAAKDGLYQYKNIAQNTNVGTIEVVLKKFIELAEKKVTEAQAKADEIQSSLESAAPSSNVEDLEAIETPETILLATVSGEQSRDRTDRAVVTPWLKFLWETYRTVLEILKNNARLEVMYQTTALQAFQFCLKYTRKTEFRRLCELLRNHVQNAAKYSAQMHAINLSDPDTLQRHLDTRFQQLNVAVELELWQEAFRSIEDIHTLLSLSKRPAKNVMMANYYEKLARIFLVSENYLFHAAAWNRYYNLLRQSAVALAAGQGTKKENPSVTEADMTKAASFVLLSALSIPVISTSRSRGALVDVDEARKNKNTRLTNLLGMAQPPSRAVLFRDALNKGLLKRARPEIRDLYNILEVDFHPLSICKKITPILKQIGADPEMEKYVLPLQQVILTRLFQQLSQVYESVELKFVYELAQFPDPFQITPAMIEKFIMNGCKKGDLAIRVDHTSGVLTFDTDIFSSAKALHSGSAAGSAESDVGSVQRLQNTPAEIARLQLTRLAKTLHVTCMYVDPSYNEARIQAKKAAQARAEAGAAKEHEETLARRVLIEKKKEAATDALQRKQREEETRKRIRTQQLQEAEKQRLLDEQREREKKRLKDEQDRIRQQELKKQLEELKSGVKGIDISEIDLEDMDANRLRAIKLAQLEKEKNELNERIRTTAKRIDHLERAFRREELKHIPEDYEAQKKRDMELYEAIKAETLKEAEEKHKEAVALKHRLSRLVPVFSSFRKEVSEKRHEEFEKRRKAAEREFEAKKKQRVKEVQERRRREKAEREAEERRRKEEEERAKREEEERIAKEEERRRVLAEEKAKREEERKRLDEIALRQKQREEEAEARRAARKSGLAEPPTRAAEPERPAERTAPRLNLASRTGGAPSWRERQAAKEATGAAPAPAPVPAPAAAPAAAPAPAAEAPKEEVQLPRRTGGYVPPHLRSGASASPAAPPSNGPAPEKYVPRHMRESSSSQPPSRTQTPPAPAAAASSDKPEGSPAPQKWVPRWKQQQQ.

Residues 92–121 adopt a coiled-coil conformation; it reads LKKFIELAEKKVTEAQAKADEIQSSLESAA. The region spanning 339–523 is the PCI domain; it reads MTKAASFVLL…GVLTFDTDIF (185 aa). Positions 608-899 form a coiled coil; that stretch reads RVLIEKKKEA…QKQREEEAEA (292 aa). Composition is skewed to basic and acidic residues over residues 617–632, 642–665, 795–901, and 916–926; these read AATDALQRKQREEETR, EAEKQRLLDEQREREKKRLKDEQD, EVSE…EARR, and AEPERPAERTA. Disordered regions lie at residues 617–665 and 795–1067; these read AATD…DEQD and EVSE…QQQQ. 2 stretches are compositionally biased toward low complexity: residues 965–976 and 1025–1046; these read AAPAAAPAPAAE and SSSSQPPSRTQTPPAPAAAASS.

The protein belongs to the eIF-3 subunit A family. As to quaternary structure, component of the eukaryotic translation initiation factor 3 (eIF-3) complex.

The protein resides in the cytoplasm. In terms of biological role, RNA-binding component of the eukaryotic translation initiation factor 3 (eIF-3) complex, which is involved in protein synthesis of a specialized repertoire of mRNAs and, together with other initiation factors, stimulates binding of mRNA and methionyl-tRNAi to the 40S ribosome. The eIF-3 complex specifically targets and initiates translation of a subset of mRNAs involved in cell proliferation. The polypeptide is Eukaryotic translation initiation factor 3 subunit A (tif32) (Neosartorya fischeri (strain ATCC 1020 / DSM 3700 / CBS 544.65 / FGSC A1164 / JCM 1740 / NRRL 181 / WB 181) (Aspergillus fischerianus)).